Here is a 61-residue protein sequence, read N- to C-terminus: Metallothionein-1B (61 aa).

Residues 1-29 (MDPNCSCPTSGSCSCAGSCTCKACRCPSC) form a beta region. A divalent metal cation-binding residues include C5, C7, C13, C15, C19, C21, C24, C26, C29, C33, C34, C36, C37, C41, C44, C48, C50, C57, C59, and C60. Positions 30-61 (KKSCCSCCPVGCAKCAQGCVCKGASDKCSCCA) are alpha.

This sequence belongs to the metallothionein superfamily. Type 1 family.

Functionally, metallothioneins have a high content of cysteine residues that bind various heavy metals; these proteins are transcriptionally regulated by both heavy metals and glucocorticoids. The protein is Metallothionein-1B (MT1B) of Ovis aries (Sheep).